The chain runs to 216 residues: 2,5-diamino-6-ribosylamino-4(3H)-pyrimidinone 5'-phosphate reductase (216 aa).

Residues Thr51, Asp55, 79–82 (SMAR), Val126, and 148–151 (GSTL) each bind NADP(+).

This sequence belongs to the HTP reductase family. As to quaternary structure, homodimer.

It carries out the reaction 2,5-diamino-6-(1-D-ribitylamino)pyrimidin-4(3H)-one 5'-phosphate + NADP(+) = 2,5-diamino-6-(1-D-ribosylamino)pyrimidin-4(3H)-one 5'-phosphate + NADPH + H(+). The catalysed reaction is 2,5-diamino-6-(1-D-ribitylamino)pyrimidin-4(3H)-one 5'-phosphate + NAD(+) = 2,5-diamino-6-(1-D-ribosylamino)pyrimidin-4(3H)-one 5'-phosphate + NADH + H(+). It participates in cofactor biosynthesis; riboflavin biosynthesis. Functionally, catalyzes an early step in riboflavin biosynthesis, the NADPH-dependent reduction of the ribose side chain of 2,5-diamino-6-ribosylamino-4(3H)-pyrimidinone 5'-phosphate, yielding 2,5-diamino-6-ribitylamino-4(3H)-pyrimidinone 5'-phosphate. The protein is 2,5-diamino-6-ribosylamino-4(3H)-pyrimidinone 5'-phosphate reductase of Methanothermobacter thermautotrophicus (strain ATCC 29096 / DSM 1053 / JCM 10044 / NBRC 100330 / Delta H) (Methanobacterium thermoautotrophicum).